Here is a 324-residue protein sequence, read N- to C-terminus: ATP-dependent 6-phosphofructokinase (324 aa).

An ATP-binding site is contributed by Gly-11. 21–25 serves as a coordination point for ADP; the sequence is RAVVR. Residues 72 to 73 and 102 to 105 each bind ATP; these read RE and GNGS. A Mg(2+)-binding site is contributed by Asn-103. 126 to 128 lines the substrate pocket; it reads TID. The active-site Proton acceptor is Asp-128. Residue Arg-155 coordinates ADP. Substrate-binding positions include Arg-163 and 170-172; that span reads MGR. Residues 186 to 188, Arg-212, and 214 to 216 contribute to the ADP site; these read GAD and KKF. Substrate is bound by residues Glu-223, Arg-248, and 254-257; that span reads YIQR.

Belongs to the phosphofructokinase type A (PFKA) family. ATP-dependent PFK group I subfamily. Prokaryotic clade 'B1' sub-subfamily. As to quaternary structure, homotetramer. It depends on Mg(2+) as a cofactor.

It is found in the cytoplasm. The enzyme catalyses beta-D-fructose 6-phosphate + ATP = beta-D-fructose 1,6-bisphosphate + ADP + H(+). It functions in the pathway carbohydrate degradation; glycolysis; D-glyceraldehyde 3-phosphate and glycerone phosphate from D-glucose: step 3/4. Allosterically activated by ADP and other diphosphonucleosides, and allosterically inhibited by phosphoenolpyruvate. In terms of biological role, catalyzes the phosphorylation of D-fructose 6-phosphate to fructose 1,6-bisphosphate by ATP, the first committing step of glycolysis. This chain is ATP-dependent 6-phosphofructokinase, found in Persephonella marina (strain DSM 14350 / EX-H1).